The chain runs to 596 residues: Arginine--tRNA ligase (596 aa).

The short motif at P123–H133 is the 'HIGH' region element.

The protein belongs to the class-I aminoacyl-tRNA synthetase family. In terms of assembly, monomer.

Its subcellular location is the cytoplasm. The catalysed reaction is tRNA(Arg) + L-arginine + ATP = L-arginyl-tRNA(Arg) + AMP + diphosphate. This chain is Arginine--tRNA ligase, found in Amoebophilus asiaticus (strain 5a2).